We begin with the raw amino-acid sequence, 474 residues long: UDP-N-acetylmuramate--L-alanine ligase (474 aa).

Residue 119–125 participates in ATP binding; it reads GTHGKTT.

It belongs to the MurCDEF family.

The protein localises to the cytoplasm. It carries out the reaction UDP-N-acetyl-alpha-D-muramate + L-alanine + ATP = UDP-N-acetyl-alpha-D-muramoyl-L-alanine + ADP + phosphate + H(+). It participates in cell wall biogenesis; peptidoglycan biosynthesis. Cell wall formation. This Jannaschia sp. (strain CCS1) protein is UDP-N-acetylmuramate--L-alanine ligase.